The sequence spans 533 residues: Probable ribonuclease ZC3H12D (533 aa).

Positions 92-246 (LRPIVIDGSN…PLGRRGPTLS (155 aa)) constitute an RNase NYN domain. Residues 251 to 282 (KKPRPPEPSWQHCPYGKKCTYGVKCRFYHPER) form a C3H1-type zinc finger. The necessary for interaction with ZC3H12A stretch occupies residues 262–368 (HCPYGKKCTY…ASGVVSQSRG (107 aa)). Positions 302–335 (LGGGAEEPRTPSARSRPTTARLLPQEPGEHDLPP) are disordered.

This sequence belongs to the ZC3H12 family. In terms of assembly, interacts with ZC3H12A. Requires Mg(2+) as cofactor. As to expression, expressed at low levels in bone marrow derived macrophages.

It localises to the cytoplasm. It is found in the P-body. Functionally, may regulate cell growth likely by suppressing RB1 phosphorylation. May function as RNase and regulate the levels of target RNA species (Potential). In association with ZC3H12A enhances the degradation of interleukin IL-6 mRNA level in activated macrophages. Serve as a tumor suppressor in certain leukemia cells. Overexpression inhibits the G1 to S phase progression through suppression of RB1 phosphorylation. The chain is Probable ribonuclease ZC3H12D from Mus musculus (Mouse).